Reading from the N-terminus, the 446-residue chain is Histone acetyltransferase type B subunit 2 (446 aa).

WD repeat units follow at residues 138 to 178 (DHPG…ITPS), 189 to 229 (GHKE…GTSK), 231 to 270 (LKYS…QIID), 286 to 326 (GHSD…SKVH), and 330 to 370 (GHQD…DEQT). Residues 372–376 (DDAED) are interaction with the histone H4 N-terminus. A WD 6 repeat occupies 387–427 (GHTNHLADFSWNRNDPWLVCSAAEDNLLQIWKVANSIVSKE). The segment at 427-446 (EPADMSTPELDDPKPKQSSH) is disordered. The span at 437 to 446 (DDPKPKQSSH) shows a compositional bias: basic and acidic residues.

It belongs to the WD repeat RBAP46/RBAP48/MSI1 family. In terms of assembly, component of the HAT-B complex composed of at least hat-1 and hat-2. The HAT-B complex binds to histone H4 tail.

It localises to the cytoplasm. Its subcellular location is the nucleus. Its function is as follows. Regulatory subunit of the histone acetylase B (HAT-B) complex. The complex acetylates 'Lys-12' of histone H4 which is required for telomeric silencing. The protein is Histone acetyltransferase type B subunit 2 (hat-2) of Neurospora crassa (strain ATCC 24698 / 74-OR23-1A / CBS 708.71 / DSM 1257 / FGSC 987).